Here is a 436-residue protein sequence, read N- to C-terminus: ATP-dependent protease ATPase subunit HslU (436 aa).

Residues Ile18, 60–65 (GVGKTE), Asp249, Glu314, and Arg386 each bind ATP.

The protein belongs to the ClpX chaperone family. HslU subfamily. A double ring-shaped homohexamer of HslV is capped on each side by a ring-shaped HslU homohexamer. The assembly of the HslU/HslV complex is dependent on binding of ATP.

It is found in the cytoplasm. Functionally, ATPase subunit of a proteasome-like degradation complex; this subunit has chaperone activity. The binding of ATP and its subsequent hydrolysis by HslU are essential for unfolding of protein substrates subsequently hydrolyzed by HslV. HslU recognizes the N-terminal part of its protein substrates and unfolds these before they are guided to HslV for hydrolysis. This Chelativorans sp. (strain BNC1) protein is ATP-dependent protease ATPase subunit HslU.